A 1722-amino-acid polypeptide reads, in one-letter code: MSDPRPSQAEKHKLGRAASKFKDPSRAMQSDDYFARKFKAINGSMGPATLNTSSLSEGGGGGGGPANGTPAVPKMGVRARVSEWPPKKDCSKDLACKTLWESRSQSSYESATSIIQNGQNDQVDRQQEEQLDLDFVEAKYTIGDIFVHSPQRGLHPIRQRSNSDITISDIDTEDVLDQHAVNPNTGAALHREYGSTSSIDRQGLSGENVFAMLRGYRIESYDPKVTSSFGFPDFFPCDTAISPSLHAAAQISRGEFVRISGLDYMDGGLLMGRDRDKPFKRRLKSESVETSLFRKLRTVKSEHETFKFTSDLEEGRLDRGIRPWSCQRCFAHYDVQSILFNINEAMATRASVGKRKNITTGASAASQTPVPVGPAGGCESPLGSKEDLNAKENPDADEGDGKSNDLVLSCPYFRNETGGEGDRRIALSRANSASFSSGESCSFESSLSSHCTNAGVSVLEVPRENQPIHREKVKRYIIEHVDLGAYYYRKFFYGKEHQNYFGIDENLGPVAVSIRREKVEDPREKEGSQFNYRVAFRTSELTTLRGAILEDAVPSTARHGTARGLPLKEVLEYVIPELSIPCLRQAANSPKVPEQLLKLDEQGLSFQHKIGILYCKAGQSTEEEMYNNETAGPAFEEFLDLLGQRVRLKGFSKYRAQLDNKTDSTGTHSLYTTYKDFELMFHVSTLLPYMPNNRQQLLRKRHIGNDIVTIVFQEPGALPFTPKNIRSHFQHVFVIVKVHNPCTENVCYSVGVFRSKDVPPFVPPIPKGVTFPRTGVFRDFLLAKGINAENAAHKSEKFRAMATRTRHEYLKDLAENFVTTTTVDTSAKFSFITLGAKKKERVKPRTDAHLFSIGAIMWHVVARYFGQSADIECLLGISNEFIMLIEKESKNVAFNCSCRDVIGWTSGLVSIKIFYERGECILLSSVDNSSEDIREIVQRLVIVTRGCETVEMTLRRNGLGQLGFHVNFEGIVADVEPFGFAWKAGLRQGSRLVEICKVAVATLTHEQMIDLLRTSVTVKVVIIQPHEDGSPRRGCSELCRIPMVEYKLDSEGTPCEYKTPFRRNTTWHRVPTPALQPVSRASPVPGTPDRLQCQPLLQQAQAAIPRSTSFDRKLPDGTRSSPSNQSSSSDPGPGGSGPWRPQVGYDGCPSPLLLEPQGPGSVECDGSGDHEDLMEVGRLPETKWHGPPSKVLSSYKERALQKDGSCKDSPNKLSHIGDKSCSSHSSSNTLSSNTSSNSDDKHFGSGDLMDPELLGLTYIKGASTDSGIDTTPCMPATILGPMHLTGSRSLIHSRAEQWADAADVSGADEDPAKMYTLHGYASAISSSAADGSMGDLSEVSSHSSGSHRSGSPSTHCSKSTGSLDSSKVYIVTHSGGQQVPGAVAKPYHRQGAANKYVIGWKKSEGSPPPEEPEVTECPRIYGEMDIMSTASQHPAVVGDSVPEAQHVLSKDDFLKLMLPDSPLVEEGRRKFSFYGNLSPRRSLYRTLSDESVCSNRRGSSFASSRSSILDQALPNDILFSTTPPYHSTLPPRTHPAPSMGSLRNEFWFSDGSLSDKSKCADPGLMPLPDTAAGLDWSHLVDAARAFEGLDSDEELGLLCHHASYLDQRVASFCTLTDLQHGQELEGAPELSLCVDPTSGKEFMDTPGERSPSTLTGKVNQLELILRQLQTDLRKEKQDKAVLQAEVQHLRQDNMRLQEESQTATAQLRTFTEWFFSTIDKKV.

Disordered stretches follow at residues 1–29 (MSDP…RAMQ) and 45–73 (MGPA…PAVP). The span at 57 to 66 (EGGGGGGGPA) shows a compositional bias: gly residues. Phosphoserine occurs at positions 149, 380, and 384. The segment at 362–404 (ASAASQTPVPVGPAGGCESPLGSKEDLNAKENPDADEGDGKSN) is disordered. Residues 384–403 (SKEDLNAKENPDADEGDGKS) are compositionally biased toward basic and acidic residues. Positions 596–813 (LLKLDEQGLS…RTRHEYLKDL (218 aa)) constitute a Rap-GAP domain. The 77-residue stretch at 951 to 1027 (EMTLRRNGLG…VKVVIIQPHE (77 aa)) folds into the PDZ domain. Ser1030 is subject to Phosphoserine. Disordered regions lie at residues 1068–1172 (HRVP…DHED), 1197–1246 (ERAL…FGSG), and 1328–1361 (AADG…KSTG). Low complexity-rich tracts occupy residues 1091–1103 (LQCQ…AQAA) and 1120–1131 (SSPSNQSSSSDP). The span at 1197–1218 (ERALQKDGSCKDSPNKLSHIGD) shows a compositional bias: basic and acidic residues. A compositionally biased stretch (low complexity) spans 1220-1237 (SCSSHSSSNTLSSNTSSN). Position 1245 is a phosphoserine (Ser1245). A compositionally biased stretch (low complexity) spans 1328–1355 (AADGSMGDLSEVSSHSSGSHRSGSPSTH). Phosphoserine is present on residues Ser1461, Ser1472, Ser1478, Ser1488, Ser1549, Ser1552, and Ser1591. A coiled-coil region spans residues 1652 to 1712 (STLTGKVNQL…ATAQLRTFTE (61 aa)).

In Rattus norvegicus (Rat), this protein is Signal-induced proliferation-associated 1-like protein 2 (Sipa1l2).